Reading from the N-terminus, the 699-residue chain is Elongation factor G (699 aa).

The 283-residue stretch at 8 to 290 (ERYRNIGIMA…GVIEYLPSPV (283 aa)) folds into the tr-type G domain. GTP is bound by residues 17–24 (AHIDAGKT), 88–92 (DTPGH), and 142–145 (NKMD).

Belongs to the TRAFAC class translation factor GTPase superfamily. Classic translation factor GTPase family. EF-G/EF-2 subfamily.

Its subcellular location is the cytoplasm. Its function is as follows. Catalyzes the GTP-dependent ribosomal translocation step during translation elongation. During this step, the ribosome changes from the pre-translocational (PRE) to the post-translocational (POST) state as the newly formed A-site-bound peptidyl-tRNA and P-site-bound deacylated tRNA move to the P and E sites, respectively. Catalyzes the coordinated movement of the two tRNA molecules, the mRNA and conformational changes in the ribosome. The sequence is that of Elongation factor G from Alkalilimnicola ehrlichii (strain ATCC BAA-1101 / DSM 17681 / MLHE-1).